Reading from the N-terminus, the 99-residue chain is DNA-directed RNA polymerase subunit omega (99 aa).

The protein belongs to the RNA polymerase subunit omega family. In terms of assembly, the RNAP catalytic core consists of 2 alpha, 1 beta, 1 beta' and 1 omega subunit. When a sigma factor is associated with the core the holoenzyme is formed, which can initiate transcription.

It carries out the reaction RNA(n) + a ribonucleoside 5'-triphosphate = RNA(n+1) + diphosphate. Promotes RNA polymerase assembly. Latches the N- and C-terminal regions of the beta' subunit thereby facilitating its interaction with the beta and alpha subunits. This chain is DNA-directed RNA polymerase subunit omega, found in Stenotrophomonas maltophilia (strain K279a).